We begin with the raw amino-acid sequence, 330 residues long: ADP-L-glycero-D-manno-heptose-6-epimerase (330 aa).

NADP(+) contacts are provided by residues 11 to 12, 32 to 33, Lys39, Lys54, 75 to 79, and Asn92; these read FI, DN, and EGACS. Catalysis depends on Tyr139, which acts as the Proton acceptor. Lys143 is a binding site for NADP(+). Residue Asn168 coordinates substrate. Residues Val169 and Lys177 each contribute to the NADP(+) site. Lys177 acts as the Proton acceptor in catalysis. Substrate-binding positions include Arg179, His186, 200–203, Arg213, and Tyr292; that span reads FGEY.

This sequence belongs to the NAD(P)-dependent epimerase/dehydratase family. HldD subfamily. Homopentamer. It depends on NADP(+) as a cofactor.

It carries out the reaction ADP-D-glycero-beta-D-manno-heptose = ADP-L-glycero-beta-D-manno-heptose. Its pathway is nucleotide-sugar biosynthesis; ADP-L-glycero-beta-D-manno-heptose biosynthesis; ADP-L-glycero-beta-D-manno-heptose from D-glycero-beta-D-manno-heptose 7-phosphate: step 4/4. Catalyzes the interconversion between ADP-D-glycero-beta-D-manno-heptose and ADP-L-glycero-beta-D-manno-heptose via an epimerization at carbon 6 of the heptose. The sequence is that of ADP-L-glycero-D-manno-heptose-6-epimerase from Paraburkholderia xenovorans (strain LB400).